The primary structure comprises 295 residues: Pyridoxal 5'-phosphate synthase subunit PdxS (295 aa).

Position 25 (Asp-25) interacts with D-ribose 5-phosphate. Lys-82 acts as the Schiff-base intermediate with D-ribose 5-phosphate in catalysis. Gly-154 is a binding site for D-ribose 5-phosphate. Arg-166 provides a ligand contact to D-glyceraldehyde 3-phosphate. D-ribose 5-phosphate is bound by residues Gly-215 and 236 to 237 (GS).

The protein belongs to the PdxS/SNZ family. In terms of assembly, in the presence of PdxT, forms a dodecamer of heterodimers.

It carries out the reaction aldehydo-D-ribose 5-phosphate + D-glyceraldehyde 3-phosphate + L-glutamine = pyridoxal 5'-phosphate + L-glutamate + phosphate + 3 H2O + H(+). Its pathway is cofactor biosynthesis; pyridoxal 5'-phosphate biosynthesis. Functionally, catalyzes the formation of pyridoxal 5'-phosphate from ribose 5-phosphate (RBP), glyceraldehyde 3-phosphate (G3P) and ammonia. The ammonia is provided by the PdxT subunit. Can also use ribulose 5-phosphate and dihydroxyacetone phosphate as substrates, resulting from enzyme-catalyzed isomerization of RBP and G3P, respectively. The chain is Pyridoxal 5'-phosphate synthase subunit PdxS from Staphylococcus carnosus (strain TM300).